Reading from the N-terminus, the 333-residue chain is Ketol-acid reductoisomerase (NADP(+)) (333 aa).

The KARI N-terminal Rossmann domain maps to 1 to 179 (MFYDDDADLS…GGTRAGVIKT (179 aa)). NADP(+) contacts are provided by residues 22–25 (YGSQ), lysine 45, serine 48, serine 50, and 80–83 (DTAQ). Histidine 105 is an active-site residue. Glycine 131 provides a ligand contact to NADP(+). In terms of domain architecture, KARI C-terminal knotted spans 180-325 (TFKDETETDL…KKLRDLMSWV (146 aa)). Aspartate 188, glutamate 192, glutamate 224, and glutamate 228 together coordinate Mg(2+). Serine 249 is a substrate binding site.

This sequence belongs to the ketol-acid reductoisomerase family. It depends on Mg(2+) as a cofactor.

It carries out the reaction (2R)-2,3-dihydroxy-3-methylbutanoate + NADP(+) = (2S)-2-acetolactate + NADPH + H(+). It catalyses the reaction (2R,3R)-2,3-dihydroxy-3-methylpentanoate + NADP(+) = (S)-2-ethyl-2-hydroxy-3-oxobutanoate + NADPH + H(+). It functions in the pathway amino-acid biosynthesis; L-isoleucine biosynthesis; L-isoleucine from 2-oxobutanoate: step 2/4. The protein operates within amino-acid biosynthesis; L-valine biosynthesis; L-valine from pyruvate: step 2/4. In terms of biological role, involved in the biosynthesis of branched-chain amino acids (BCAA). Catalyzes an alkyl-migration followed by a ketol-acid reduction of (S)-2-acetolactate (S2AL) to yield (R)-2,3-dihydroxy-isovalerate. In the isomerase reaction, S2AL is rearranged via a Mg-dependent methyl migration to produce 3-hydroxy-3-methyl-2-ketobutyrate (HMKB). In the reductase reaction, this 2-ketoacid undergoes a metal-dependent reduction by NADPH to yield (R)-2,3-dihydroxy-isovalerate. The sequence is that of Ketol-acid reductoisomerase (NADP(+)) from Mycobacterium ulcerans (strain Agy99).